A 629-amino-acid polypeptide reads, in one-letter code: tRNA uridine 5-carboxymethylaminomethyl modification enzyme MnmG (629 aa).

Residues 15–20 (GAGHAG), Val127, and Ser182 contribute to the FAD site. The segment at 203–227 (TPPRVKSSTIDYSKTEEQPGDDHPR) is disordered. Residues 215–227 (SKTEEQPGDDHPR) are compositionally biased toward basic and acidic residues. Residue 274–288 (GARYCPSIEDKIVRF) participates in NAD(+) binding. Gln371 contacts FAD.

It belongs to the MnmG family. In terms of assembly, homodimer. Heterotetramer of two MnmE and two MnmG subunits. It depends on FAD as a cofactor.

Its subcellular location is the cytoplasm. In terms of biological role, NAD-binding protein involved in the addition of a carboxymethylaminomethyl (cmnm) group at the wobble position (U34) of certain tRNAs, forming tRNA-cmnm(5)s(2)U34. This Listeria welshimeri serovar 6b (strain ATCC 35897 / DSM 20650 / CCUG 15529 / CIP 8149 / NCTC 11857 / SLCC 5334 / V8) protein is tRNA uridine 5-carboxymethylaminomethyl modification enzyme MnmG.